A 202-amino-acid chain; its full sequence is Imidazole glycerol phosphate synthase subunit HisH (202 aa).

The 200-residue stretch at 3-202 (RIVILDYGLG…KILKNFVDMC (200 aa)) folds into the Glutamine amidotransferase type-1 domain. Cys-79 acts as the Nucleophile in catalysis. Catalysis depends on residues His-183 and Glu-185.

In terms of assembly, heterodimer of HisH and HisF.

It is found in the cytoplasm. It catalyses the reaction 5-[(5-phospho-1-deoxy-D-ribulos-1-ylimino)methylamino]-1-(5-phospho-beta-D-ribosyl)imidazole-4-carboxamide + L-glutamine = D-erythro-1-(imidazol-4-yl)glycerol 3-phosphate + 5-amino-1-(5-phospho-beta-D-ribosyl)imidazole-4-carboxamide + L-glutamate + H(+). It carries out the reaction L-glutamine + H2O = L-glutamate + NH4(+). Its pathway is amino-acid biosynthesis; L-histidine biosynthesis; L-histidine from 5-phospho-alpha-D-ribose 1-diphosphate: step 5/9. In terms of biological role, IGPS catalyzes the conversion of PRFAR and glutamine to IGP, AICAR and glutamate. The HisH subunit catalyzes the hydrolysis of glutamine to glutamate and ammonia as part of the synthesis of IGP and AICAR. The resulting ammonia molecule is channeled to the active site of HisF. This is Imidazole glycerol phosphate synthase subunit HisH from Methanosarcina barkeri (strain Fusaro / DSM 804).